Consider the following 570-residue polypeptide: Adenine deaminase 2 (570 aa).

The protein belongs to the metallo-dependent hydrolases superfamily. Adenine deaminase family. Mn(2+) serves as cofactor.

It carries out the reaction adenine + H2O + H(+) = hypoxanthine + NH4(+). This Carboxydothermus hydrogenoformans (strain ATCC BAA-161 / DSM 6008 / Z-2901) protein is Adenine deaminase 2.